The chain runs to 114 residues: Adapter SH3BGRL (114 aa).

The interval 13–50 (SMAIKKKQQDVLGFLEANKIGFEEKDIAANEENRKWMR) is required for interaction with HER2. Residues 54–71 (PENSRPATGYPLPPQIFN) are required for interaction with PFN1, HER2, and ATG12. The SH3-binding signature appears at 61-67 (TGYPLPP).

The protein belongs to the SH3BGR family. As to quaternary structure, monomer. Interacts with PFN1/Profilin-1. Interacts with ERBB2. Interacts with ATG12. Interacts with BECN1. Interacts with translating ribosomes.

The protein resides in the cytoplasm. The protein localises to the cytosol. Its subcellular location is the cell membrane. Functionally, appears to function as an adapter protein that bridges proteins together or proteins with mRNAs. May function as a ubiquitin ligase-substrate adapter. Additionally, associates with translating cytoplasmic ribosomes and may promote the expression of specific mRNAs. The sequence is that of Adapter SH3BGRL (SH3BGRL) from Bos taurus (Bovine).